Reading from the N-terminus, the 171-residue chain is MPNPAAGRFGRLAWLWLSLLVLVIDQATKLYFNNALTMYQQIVVIPDYFSWTLAYNTGAAFSFLADGAGWQRWLFALIAVVVSAVLVVWLKRLGRNETWLAVALALVLGGAIGNLYDRIVLGHVVDFILVHWQNRHYFPAFNVADSAITVGAVMLALDMFKSKKSEDPVHD.

The next 4 membrane-spanning stretches (helical) occupy residues 12–32, 42–62, 70–90, and 96–116; these read LAWLWLSLLVLVIDQATKLYF, IVVIPDYFSWTLAYNTGAAFS, WQRWLFALIAVVVSAVLVVWL, and NETWLAVALALVLGGAIGNLY. Active-site residues include Asp126 and Asp145. The chain crosses the membrane as a helical span at residues 137–157; the sequence is YFPAFNVADSAITVGAVMLAL.

It belongs to the peptidase A8 family.

The protein localises to the cell inner membrane. It carries out the reaction Release of signal peptides from bacterial membrane prolipoproteins. Hydrolyzes -Xaa-Yaa-Zaa-|-(S,diacylglyceryl)Cys-, in which Xaa is hydrophobic (preferably Leu), and Yaa (Ala or Ser) and Zaa (Gly or Ala) have small, neutral side chains.. It participates in protein modification; lipoprotein biosynthesis (signal peptide cleavage). This protein specifically catalyzes the removal of signal peptides from prolipoproteins. This is Lipoprotein signal peptidase from Pseudomonas putida (strain ATCC 47054 / DSM 6125 / CFBP 8728 / NCIMB 11950 / KT2440).